The chain runs to 100 residues: Urease subunit gamma (100 aa).

The protein belongs to the urease gamma subunit family. As to quaternary structure, heterotrimer of UreA (gamma), UreB (beta) and UreC (alpha) subunits. Three heterotrimers associate to form the active enzyme.

The protein localises to the cytoplasm. The enzyme catalyses urea + 2 H2O + H(+) = hydrogencarbonate + 2 NH4(+). Its pathway is nitrogen metabolism; urea degradation; CO(2) and NH(3) from urea (urease route): step 1/1. This chain is Urease subunit gamma, found in Corynebacterium glutamicum (strain R).